Consider the following 376-residue polypeptide: GTPase Obg (376 aa).

The region spanning 2-161 is the Obg domain; that stretch reads ASFVDEVLIR…RVVHVELRIV (160 aa). The OBG-type G domain maps to 162 to 328; it reads ADVGFVGLPN…LQEAFVRLSD (167 aa). GTP contacts are provided by residues 168 to 175, 193 to 197, 215 to 218, 282 to 285, and 309 to 311; these read GLPNAGKS, FTTRI, DVPG, TKLD, and SVH. S175 and T195 together coordinate Mg(2+).

It belongs to the TRAFAC class OBG-HflX-like GTPase superfamily. OBG GTPase family. In terms of assembly, monomer. The cofactor is Mg(2+).

The protein localises to the cytoplasm. An essential GTPase which binds GTP, GDP and possibly (p)ppGpp with moderate affinity, with high nucleotide exchange rates and a fairly low GTP hydrolysis rate. Plays a role in control of the cell cycle, stress response, ribosome biogenesis and in those bacteria that undergo differentiation, in morphogenesis control. The sequence is that of GTPase Obg from Treponema pallidum (strain Nichols).